We begin with the raw amino-acid sequence, 137 residues long: MMQPKKTKFRKAHKGRIHGVASSGATLAFGQFGLKAMEPERVTARQIEAARRALTRHMKRAGRVWIRIFPDVPVSKKPAEVRMGSGKGAPELWVARVKPGRVMFEIDGVNQQTAKEALTLAAAKLPIKTRFVARIAE.

The protein belongs to the universal ribosomal protein uL16 family. As to quaternary structure, part of the 50S ribosomal subunit.

Binds 23S rRNA and is also seen to make contacts with the A and possibly P site tRNAs. The polypeptide is Large ribosomal subunit protein uL16 (Rhodopseudomonas palustris (strain HaA2)).